We begin with the raw amino-acid sequence, 549 residues long: OBERON-like protein (549 aa).

The segment at 1-56 (MLPPRQQPRPGGLQTSLSLVSPDACGSPNPQERGSTSDQARDSPSESASSRETWPT) is disordered. Polar residues-rich tracts occupy residues 28–38 (PNPQERGSTSD) and 45–56 (SESASSRETWPT). The PHD-type zinc finger occupies 224–288 (LCMCVICYKF…LFRCHACSRT (65 aa)). Positions 394 to 520 (VQEAIRKMEA…YLFEKIKLQE (127 aa)) form a coiled coil. Residues 519–549 (QESSRASQSSAGGNDPSQMMYSKIQDLIKNM) form a disordered region. Polar residues predominate over residues 521–538 (SSRASQSSAGGNDPSQMM).

In terms of assembly, self-interacts and probably forms heteromers. Binds to VPg of pea seed borne mosaic virus (PSbMV), turnip mosaic virus (TuMV) and lettuce mosaic virus (LMV), but not with VPg of tobacco etch virus (TEV), cowpea mosaic virus (CPMV), tomato black ring virus (TBRV) and grapevine fan leaf virus (GFLV).

The protein localises to the nucleus. In terms of biological role, required for the maintenance and/or establishment of both the shoot and root meristems, probably by controlling the expression of the meristem genes and of genes required for auxin responses. Involved in the development of the basal pole and in auxin-mediated root and vascular development in the embryo. Confers sensitivity to turnip mosaic virus (TuMV) probably by promoting viral movement and multiplication via interaction with TuMV VPg. The chain is OBERON-like protein (PVIP) from Nicotiana benthamiana.